The sequence spans 123 residues: MKRLYNFLSSYEKRKLRNRAKLDKSAGRLRISIFKSNKHFYVQLINDAKGTTLASASTLDDKIRNVCKGRVNAETIKQVSSLLIERLPSTKLQQRFVFDRGAYKYTGLISQFAEALRSSGFKF.

Belongs to the universal ribosomal protein uL18 family. Part of the 50S ribosomal subunit; part of the 5S rRNA/L5/L18/L25 subcomplex. Contacts the 5S and 23S rRNAs.

In terms of biological role, this is one of the proteins that bind and probably mediate the attachment of the 5S RNA into the large ribosomal subunit, where it forms part of the central protuberance. This chain is Large ribosomal subunit protein uL18, found in Wolbachia pipientis subsp. Culex pipiens (strain wPip).